Reading from the N-terminus, the 385-residue chain is 1-deoxy-D-xylulose 5-phosphate reductoisomerase (385 aa).

NADPH contacts are provided by threonine 11, glycine 12, serine 13, isoleucine 14, alanine 37, arginine 38, asparagine 39, and asparagine 123. Lysine 124 lines the 1-deoxy-D-xylulose 5-phosphate pocket. Residue glutamate 125 coordinates NADPH. Position 149 (aspartate 149) interacts with Mn(2+). Residues serine 150, glutamate 151, serine 173, and histidine 196 each coordinate 1-deoxy-D-xylulose 5-phosphate. Glutamate 151 contacts Mn(2+). An NADPH-binding site is contributed by glycine 202. 1-deoxy-D-xylulose 5-phosphate-binding residues include serine 209, asparagine 214, lysine 215, and glutamate 218. Glutamate 218 lines the Mn(2+) pocket.

The protein belongs to the DXR family. Mg(2+) is required as a cofactor. It depends on Mn(2+) as a cofactor.

The catalysed reaction is 2-C-methyl-D-erythritol 4-phosphate + NADP(+) = 1-deoxy-D-xylulose 5-phosphate + NADPH + H(+). It functions in the pathway isoprenoid biosynthesis; isopentenyl diphosphate biosynthesis via DXP pathway; isopentenyl diphosphate from 1-deoxy-D-xylulose 5-phosphate: step 1/6. Its function is as follows. Catalyzes the NADPH-dependent rearrangement and reduction of 1-deoxy-D-xylulose-5-phosphate (DXP) to 2-C-methyl-D-erythritol 4-phosphate (MEP). This Moorella thermoacetica (strain ATCC 39073 / JCM 9320) protein is 1-deoxy-D-xylulose 5-phosphate reductoisomerase.